The primary structure comprises 198 residues: Recombination protein RecR (198 aa).

The segment at 57 to 72 (CSVCGHITDKDPCYIC) adopts a C4-type zinc-finger fold. The region spanning 80-175 (SVICVVQESK…KVTRIAHGLP (96 aa)) is the Toprim domain.

Belongs to the RecR family.

May play a role in DNA repair. It seems to be involved in an RecBC-independent recombinational process of DNA repair. It may act with RecF and RecO. The chain is Recombination protein RecR from Listeria welshimeri serovar 6b (strain ATCC 35897 / DSM 20650 / CCUG 15529 / CIP 8149 / NCTC 11857 / SLCC 5334 / V8).